The following is a 103-amino-acid chain: Large ribosomal subunit protein bL21 (103 aa).

It belongs to the bacterial ribosomal protein bL21 family. In terms of assembly, part of the 50S ribosomal subunit. Contacts protein L20.

In terms of biological role, this protein binds to 23S rRNA in the presence of protein L20. The chain is Large ribosomal subunit protein bL21 from Mycobacteroides abscessus (strain ATCC 19977 / DSM 44196 / CCUG 20993 / CIP 104536 / JCM 13569 / NCTC 13031 / TMC 1543 / L948) (Mycobacterium abscessus).